Consider the following 176-residue polypeptide: Macro domain-containing protein lmo2759 (176 aa).

Residues 1 to 175 (MEITIVKGDI…LYNKLINSEV (175 aa)) enclose the Macro domain.

The protein belongs to the MacroD-type family.

This is Macro domain-containing protein lmo2759 from Listeria monocytogenes serovar 1/2a (strain ATCC BAA-679 / EGD-e).